A 444-amino-acid chain; its full sequence is Methylenetetrahydrofolate--tRNA-(uracil-5-)-methyltransferase TrmFO (444 aa).

10 to 15 (GAGLAG) contacts FAD.

It belongs to the MnmG family. TrmFO subfamily. FAD serves as cofactor.

The protein localises to the cytoplasm. The catalysed reaction is uridine(54) in tRNA + (6R)-5,10-methylene-5,6,7,8-tetrahydrofolate + NADH + H(+) = 5-methyluridine(54) in tRNA + (6S)-5,6,7,8-tetrahydrofolate + NAD(+). It carries out the reaction uridine(54) in tRNA + (6R)-5,10-methylene-5,6,7,8-tetrahydrofolate + NADPH + H(+) = 5-methyluridine(54) in tRNA + (6S)-5,6,7,8-tetrahydrofolate + NADP(+). Functionally, catalyzes the folate-dependent formation of 5-methyl-uridine at position 54 (M-5-U54) in all tRNAs. This chain is Methylenetetrahydrofolate--tRNA-(uracil-5-)-methyltransferase TrmFO, found in Streptococcus gordonii (strain Challis / ATCC 35105 / BCRC 15272 / CH1 / DL1 / V288).